The following is a 1755-amino-acid chain: Transposon TyH3 Gag-Pol polyprotein (1755 aa).

Composition is skewed to polar residues over residues 1–23 (MESQ…SVTS), 48–60 (TKAN…TPAS), and 127–152 (QSQF…GNTF). 3 disordered regions span residues 1 to 93 (MESQ…MMTQ), 126 to 173 (PQSQ…RPPP), and 352 to 421 (GSRN…SKST). The span at 153-165 (TDSSSADSDMTST) shows a compositional bias: low complexity. The segment at 299-401 (NNGIHINNKV…NSKSKTARAH (103 aa)) is RNA-binding. Residues 402 to 418 (NVSTSNNSPSTDNDSIS) show a composition bias toward low complexity. Serine 416 is subject to Phosphoserine. Aspartate 461 (for protease activity; shared with dimeric partner) is an active-site residue. Residues 583 to 640 (NVHTSESTRKYPYPFIHRMLAHANAQTIRYSLKNNTITYFNESDVDWSSAIDYQCPDC) form an integrase-type zinc finger-like region. Residues 660–835 (NSYEPFQYLH…AGLDISTLLP (176 aa)) enclose the Integrase catalytic domain. Aspartate 671 and aspartate 736 together coordinate Mg(2+). 3 disordered regions span residues 956-1087 (SKAV…ETEK), 1092-1111 (RSPS…NIVP), and 1130-1187 (DLPL…DNET). The segment covering 960–969 (SPTDSTPPST) has biased composition (low complexity). The segment covering 1005–1015 (STPQISNIEST) has biased composition (polar residues). Residues 1038–1053 (ESSHASKSKDFRHSDS) show a composition bias toward basic and acidic residues. Polar residues-rich tracts occupy residues 1054-1082 (YSEN…QISD) and 1101-1111 (PENNSSHNIVP). Residues 1178-1212 (KKRSLEDNETEIKVSRDTWNTKNMRSLEPPRSKKR) carry the Bipartite nuclear localization signal motif. Residues 1338–1476 (NNYYITQLDI…DILGLEIKYQ (139 aa)) form the Reverse transcriptase Ty1/copia-type domain. Aspartate 1346, aspartate 1427, aspartate 1428, aspartate 1610, glutamate 1652, and aspartate 1685 together coordinate Mg(2+). In terms of domain architecture, RNase H Ty1/copia-type spans 1610 to 1752 (DASYGNQPYY…IKTFKLLTNK (143 aa)).

As to quaternary structure, the capsid protein forms a homotrimer, from which the VLPs are assembled. The protease is a homodimer, whose active site consists of two apposed aspartic acid residues. Initially, virus-like particles (VLPs) are composed of the structural unprocessed proteins Gag and Gag-Pol, and also contain the host initiator methionine tRNA (tRNA(i)-Met) which serves as a primer for minus-strand DNA synthesis, and a dimer of genomic Ty RNA. Processing of the polyproteins occurs within the particle and proceeds by an ordered pathway, called maturation. First, the protease (PR) is released by autocatalytic cleavage of the Gag-Pol polyprotein yielding capsid protein p45 and a Pol-p154 precursor protein. This cleavage is a prerequisite for subsequent processing of Pol-p154 at the remaining sites to release the mature structural and catalytic proteins. Maturation takes place prior to the RT reaction and is required to produce transposition-competent VLPs.

It is found in the cytoplasm. It localises to the nucleus. It catalyses the reaction DNA(n) + a 2'-deoxyribonucleoside 5'-triphosphate = DNA(n+1) + diphosphate. The catalysed reaction is Endonucleolytic cleavage to 5'-phosphomonoester.. Capsid protein (CA) is the structural component of the virus-like particle (VLP), forming the shell that encapsulates the retrotransposons dimeric RNA genome. The particles are assembled from trimer-clustered units and there are holes in the capsid shells that allow for the diffusion of macromolecules. CA also has nucleocapsid-like chaperone activity, promoting primer tRNA(i)-Met annealing to the multipartite primer-binding site (PBS), dimerization of Ty1 RNA and initiation of reverse transcription. Its function is as follows. The aspartyl protease (PR) mediates the proteolytic cleavages of the Gag and Gag-Pol polyproteins after assembly of the VLP. In terms of biological role, reverse transcriptase/ribonuclease H (RT) is a multifunctional enzyme that catalyzes the conversion of the retro-elements RNA genome into dsDNA within the VLP. The enzyme displays a DNA polymerase activity that can copy either DNA or RNA templates, and a ribonuclease H (RNase H) activity that cleaves the RNA strand of RNA-DNA heteroduplexes during plus-strand synthesis and hydrolyzes RNA primers. The conversion leads to a linear dsDNA copy of the retrotransposon that includes long terminal repeats (LTRs) at both ends. Functionally, integrase (IN) targets the VLP to the nucleus, where a subparticle preintegration complex (PIC) containing at least integrase and the newly synthesized dsDNA copy of the retrotransposon must transit the nuclear membrane. Once in the nucleus, integrase performs the integration of the dsDNA into the host genome. The chain is Transposon TyH3 Gag-Pol polyprotein (TY1B) from Saccharomyces cerevisiae (Baker's yeast).